We begin with the raw amino-acid sequence, 461 residues long: Transcription factor SOX-10 (461 aa).

Disordered regions lie at residues 1-60, 154-191, 205-268, 350-369, and 433-461; these read MADD…ADDD, LRMQHKKDHPDYKYQPRRRKNGKATQGEGEGQVEGEAG, LDHR…DFGN, KAQVKTEGSAPGGHYTDQPS, and AISDPAPSVPQSHSPTHWEQPVYTTLSRP. Positions 30 to 42 are enriched in polar residues; it reads ASDNSSHLASSGN. The tract at residues 56 to 96 is dimerization (DIM); it reads EADDDKFPVCIREAVSQVLSGYDWTLVPMPVRVNGSNKSKP. The HMG box DNA-binding region spans 98–166; sequence VKRPMNAFMV…QHKKDHPDYK (69 aa). Positions 154–167 are enriched in basic and acidic residues; it reads LRMQHKKDHPDYKY. The span at 181–191 shows a compositional bias: gly residues; the sequence is EGEGQVEGEAG. Residues 221–306 form a transactivation domain (TAM) region; it reads PEHSSGQSHG…NGHAGHPGHV (86 aa). A compositionally biased stretch (basic and acidic residues) spans 247-264; that stretch reads ADSKREGRSLGEGGKPHI. Residues 350–461 form a transactivation domain (TAC) region; sequence KAQVKTEGSA…QPVYTTLSRP (112 aa). Positions 441–461 are enriched in polar residues; sequence VPQSHSPTHWEQPVYTTLSRP.

The protein resides in the cytoplasm. Its subcellular location is the nucleus. Its function is as follows. Transcription factor that plays a central role in developing and mature glia. Specifically activates expression of myelin genes, during oligodendrocyte (OL) maturation, thereby playing a central role in oligodendrocyte maturation and CNS myelination. The chain is Transcription factor SOX-10 (SOX10) from Gallus gallus (Chicken).